Here is a 451-residue protein sequence, read N- to C-terminus: Bifunctional protein GlmU (451 aa).

Positions Met-1–Arg-225 are pyrophosphorylase. UDP-N-acetyl-alpha-D-glucosamine contacts are provided by residues Leu-7 to Gly-10, Lys-21, Gln-72, and Gly-77 to Thr-78. Position 102 (Asp-102) interacts with Mg(2+). UDP-N-acetyl-alpha-D-glucosamine contacts are provided by Gly-139, Glu-154, Asn-169, and Asn-223. Mg(2+) is bound at residue Asn-223. A linker region spans residues Leu-226 to Ala-246. Residues Gly-247 to Ser-451 form an N-acetyltransferase region. UDP-N-acetyl-alpha-D-glucosamine-binding residues include Arg-328 and Lys-346. The active-site Proton acceptor is His-358. The UDP-N-acetyl-alpha-D-glucosamine site is built by Tyr-361 and Asn-372. Residues Ala-375, Asn-381–Tyr-382, Ser-400, Ala-418, and Arg-435 contribute to the acetyl-CoA site.

The protein in the N-terminal section; belongs to the N-acetylglucosamine-1-phosphate uridyltransferase family. In the C-terminal section; belongs to the transferase hexapeptide repeat family. As to quaternary structure, homotrimer. Mg(2+) serves as cofactor.

The protein localises to the cytoplasm. It catalyses the reaction alpha-D-glucosamine 1-phosphate + acetyl-CoA = N-acetyl-alpha-D-glucosamine 1-phosphate + CoA + H(+). The catalysed reaction is N-acetyl-alpha-D-glucosamine 1-phosphate + UTP + H(+) = UDP-N-acetyl-alpha-D-glucosamine + diphosphate. It participates in nucleotide-sugar biosynthesis; UDP-N-acetyl-alpha-D-glucosamine biosynthesis; N-acetyl-alpha-D-glucosamine 1-phosphate from alpha-D-glucosamine 6-phosphate (route II): step 2/2. It functions in the pathway nucleotide-sugar biosynthesis; UDP-N-acetyl-alpha-D-glucosamine biosynthesis; UDP-N-acetyl-alpha-D-glucosamine from N-acetyl-alpha-D-glucosamine 1-phosphate: step 1/1. The protein operates within bacterial outer membrane biogenesis; LPS lipid A biosynthesis. Its function is as follows. Catalyzes the last two sequential reactions in the de novo biosynthetic pathway for UDP-N-acetylglucosamine (UDP-GlcNAc). The C-terminal domain catalyzes the transfer of acetyl group from acetyl coenzyme A to glucosamine-1-phosphate (GlcN-1-P) to produce N-acetylglucosamine-1-phosphate (GlcNAc-1-P), which is converted into UDP-GlcNAc by the transfer of uridine 5-monophosphate (from uridine 5-triphosphate), a reaction catalyzed by the N-terminal domain. This chain is Bifunctional protein GlmU, found in Trichormus variabilis (strain ATCC 29413 / PCC 7937) (Anabaena variabilis).